The sequence spans 127 residues: NADPH-dependent 7-cyano-7-deazaguanine reductase (127 aa).

Catalysis depends on Cys-40, which acts as the Thioimide intermediate. Catalysis depends on Asp-47, which acts as the Proton donor. Substrate-binding positions include 62–64 (VEL) and 81–82 (HE).

The protein belongs to the GTP cyclohydrolase I family. QueF type 1 subfamily.

It localises to the cytoplasm. It catalyses the reaction 7-aminomethyl-7-carbaguanine + 2 NADP(+) = 7-cyano-7-deazaguanine + 2 NADPH + 3 H(+). Its pathway is tRNA modification; tRNA-queuosine biosynthesis. Catalyzes the NADPH-dependent reduction of 7-cyano-7-deazaguanine (preQ0) to 7-aminomethyl-7-deazaguanine (preQ1). The sequence is that of NADPH-dependent 7-cyano-7-deazaguanine reductase from Campylobacter jejuni subsp. jejuni serotype O:6 (strain 81116 / NCTC 11828).